A 586-amino-acid chain; its full sequence is Dihydroxy-acid dehydratase 2 (586 aa).

Cys68 provides a ligand contact to [2Fe-2S] cluster. Residue Asp100 participates in Mg(2+) binding. A [2Fe-2S] cluster-binding site is contributed by Cys141. 2 residues coordinate Mg(2+): Asp142 and Lys143. An N6-carboxylysine modification is found at Lys143. A [2Fe-2S] cluster-binding site is contributed by Cys213. Position 463 (Glu463) interacts with Mg(2+). The active-site Proton acceptor is Ser489.

This sequence belongs to the IlvD/Edd family. Homodimer. The cofactor is [2Fe-2S] cluster. Mg(2+) is required as a cofactor.

It carries out the reaction (2R)-2,3-dihydroxy-3-methylbutanoate = 3-methyl-2-oxobutanoate + H2O. The catalysed reaction is (2R,3R)-2,3-dihydroxy-3-methylpentanoate = (S)-3-methyl-2-oxopentanoate + H2O. It functions in the pathway amino-acid biosynthesis; L-isoleucine biosynthesis; L-isoleucine from 2-oxobutanoate: step 3/4. Its pathway is amino-acid biosynthesis; L-valine biosynthesis; L-valine from pyruvate: step 3/4. Functions in the biosynthesis of branched-chain amino acids. Catalyzes the dehydration of (2R,3R)-2,3-dihydroxy-3-methylpentanoate (2,3-dihydroxy-3-methylvalerate) into 2-oxo-3-methylpentanoate (2-oxo-3-methylvalerate) and of (2R)-2,3-dihydroxy-3-methylbutanoate (2,3-dihydroxyisovalerate) into 2-oxo-3-methylbutanoate (2-oxoisovalerate), the penultimate precursor to L-isoleucine and L-valine, respectively. In Mesorhizobium japonicum (strain LMG 29417 / CECT 9101 / MAFF 303099) (Mesorhizobium loti (strain MAFF 303099)), this protein is Dihydroxy-acid dehydratase 2.